Reading from the N-terminus, the 53-residue chain is Ribulose bisphosphate carboxylase large chain (53 aa).

Residues 1–2 (MS) constitute a propeptide that is removed on maturation. N-acetylproline is present on P3. K14 carries the post-translational modification N6,N6,N6-trimethyllysine.

Belongs to the RuBisCO large chain family. Type I subfamily. As to quaternary structure, heterohexadecamer of 8 large chains and 8 small chains.

The protein resides in the plastid. The protein localises to the chloroplast. It carries out the reaction 2 (2R)-3-phosphoglycerate + 2 H(+) = D-ribulose 1,5-bisphosphate + CO2 + H2O. It catalyses the reaction D-ribulose 1,5-bisphosphate + O2 = 2-phosphoglycolate + (2R)-3-phosphoglycerate + 2 H(+). In terms of biological role, ruBisCO catalyzes two reactions: the carboxylation of D-ribulose 1,5-bisphosphate, the primary event in carbon dioxide fixation, as well as the oxidative fragmentation of the pentose substrate in the photorespiration process. Both reactions occur simultaneously and in competition at the same active site. In Malus domestica (Apple), this protein is Ribulose bisphosphate carboxylase large chain (rbcL).